Here is a 507-residue protein sequence, read N- to C-terminus: Transcription factor NIGTH1 (507 aa).

2 disordered regions span residues 139-172 (ASAA…TALD) and 238-268 (SREA…RKAR). The span at 152–161 (PKEHSEHHPL) shows a compositional bias: basic and acidic residues. Residues 263-323 (PHRKARRCWS…HLQKYRLHTR (61 aa)) enclose the HTH myb-type domain. Positions 294–319 (PKQIRELMKVDGLTNDEVKSHLQKYR) form a DNA-binding region, H-T-H motif. Positions 402-507 (AVAPPPPLPP…TTTSAGAINY (106 aa)) are disordered. Positions 412 to 433 (QQQLAPPYSAKSSASARLGSPD) are enriched in low complexity. The segment covering 437–446 (RGSGGGGGAA) has biased composition (gly residues). A compositionally biased stretch (acidic residues) spans 456–476 (ESIEEEGEGEEREDDDDDDEM).

Interacts with ACA5.

It is found in the nucleus. Its function is as follows. Probable transcription factor that may play a role in regulatory networks controlling development and metabolism. In Oryza sativa subsp. japonica (Rice), this protein is Transcription factor NIGTH1.